The primary structure comprises 544 residues: Chaperonin GroEL 1 (544 aa).

ATP is bound by residues 29 to 32 (TLGP), 86 to 90 (DGTTT), Gly-413, 482 to 484 (NVL), and Asp-498.

It belongs to the chaperonin (HSP60) family. In terms of assembly, forms a cylinder of 14 subunits composed of two heptameric rings stacked back-to-back. Interacts with the co-chaperonin GroES.

The protein localises to the cytoplasm. The enzyme catalyses ATP + H2O + a folded polypeptide = ADP + phosphate + an unfolded polypeptide.. Functionally, together with its co-chaperonin GroES, plays an essential role in assisting protein folding. The GroEL-GroES system forms a nano-cage that allows encapsulation of the non-native substrate proteins and provides a physical environment optimized to promote and accelerate protein folding. The chain is Chaperonin GroEL 1 from Chloroflexus aurantiacus (strain ATCC 29366 / DSM 635 / J-10-fl).